A 369-amino-acid polypeptide reads, in one-letter code: Septin-5 (369 aa).

Thr-13 is subject to Phosphothreonine. One can recognise a Septin-type G domain in the interval Lys-41–Gln-314. The tract at residues Gly-51–Ser-58 is G1 motif. GTP contacts are provided by residues Gly-51 to Ser-58, Thr-85, and Gly-111. The interval Asp-108–Gly-111 is G3 motif. Arg-168 is modified (omega-N-methylarginine). The segment at Ala-189–Asp-192 is G4 motif. GTP is bound at residue Lys-190–Glu-198. Ser-225 is subject to Phosphoserine. Gly-248 and Arg-263 together coordinate GTP. Position 327 is a phosphoserine (Ser-327). A Phosphothreonine modification is found at Thr-336. Residues Asp-338–Gln-369 are a coiled coil.

Belongs to the TRAFAC class TrmE-Era-EngA-EngB-Septin-like GTPase superfamily. Septin GTPase family. Septins polymerize into heterooligomeric protein complexes that form filaments, and can associate with cellular membranes, actin filaments and microtubules. GTPase activity is required for filament formation. Interacts with SEPTIN2 and SEPTIN5. In platelets, associated with a complex containing STX4. Interacts with PRKN; this interaction leads to SEPTIN5 ubiquitination and degradation. Interacts with DYRK1A. Interacts with STX1A; in the cerebellar cortex. In terms of processing, phosphorylated by DYRK1A. In platelets, phosphorylated in response to thrombin, phorbol-12-myristate-13-acetate and collagen. Expressed at high levels in the CNS, as well as in heart and platelets (at protein level).

Its subcellular location is the cytoplasm. The protein resides in the cytoskeleton. Filament-forming cytoskeletal GTPase. May play a role in cytokinesis (Potential). May play a role in platelet secretion. The protein is Septin-5 of Homo sapiens (Human).